The sequence spans 147 residues: Pathogenesis-related protein PR-4A (147 aa).

The N-terminal stretch at 1–25 (MERVNNYKLCVALLIISMVMAMAAA) is a signal peptide. In terms of domain architecture, Barwin spans 26-147 (QSATNVRSTY…VNYEFVNCND (122 aa)). 3 disulfide bridges follow: Cys54/Cys86, Cys75/Cys109, and Cys89/Cys145.

It is found in the secreted. It localises to the cell wall. The protein is Pathogenesis-related protein PR-4A of Nicotiana tabacum (Common tobacco).